The primary structure comprises 217 residues: MOB kinase activator-like 2 (217 aa).

A disordered region spans residues Gly15–Arg38. The span at Tyr23 to Arg38 shows a compositional bias: basic residues. Positions 89, 94, 167, and 172 each coordinate Zn(2+).

Belongs to the MOB1/phocein family.

This Dictyostelium discoideum (Social amoeba) protein is MOB kinase activator-like 2 (mob2).